The primary structure comprises 257 residues: MSMVDTAPGKIQVRDLNFYYGKFHALKNINLDIAKNQVTAFIGPSGCGKSTLLRTFNKMYSLYPEQRAEGEIILDGENILTQAQDIALLRAKVGMVFQKPTPFPMSIYDNIAFGVRLFEKLSRADMDERVQWALTKAALWNETKDKLHQSGYSLSGGQQQRLCIARGIAIRPEVLLLDEPCSALDPISTGRIEELITELKQDYTVVIVTHNMQQAARCSDHTAFMYLGELIEFSDTDALFTRPAKKQTEDYITGRYG.

Residues 11-252 form the ABC transporter domain; the sequence is IQVRDLNFYY…PAKKQTEDYI (242 aa). Position 43 to 50 (43 to 50) interacts with ATP; that stretch reads GPSGCGKS.

This sequence belongs to the ABC transporter superfamily. Phosphate importer (TC 3.A.1.7) family. The complex is composed of two ATP-binding proteins (PstB), two transmembrane proteins (PstC and PstA) and a solute-binding protein (PstS).

It localises to the cell inner membrane. The enzyme catalyses phosphate(out) + ATP + H2O = ADP + 2 phosphate(in) + H(+). Its function is as follows. Part of the ABC transporter complex PstSACB involved in phosphate import. Responsible for energy coupling to the transport system. The sequence is that of Phosphate import ATP-binding protein PstB from Enterobacter cloacae.